The following is a 491-amino-acid chain: Cobyric acid synthase (491 aa).

One can recognise a GATase cobBQ-type domain in the interval 258–445 (ALKVAVPVLG…MHGLFGADAF (188 aa)). Cys-340 (nucleophile) is an active-site residue. His-437 is an active-site residue.

The protein belongs to the CobB/CobQ family. CobQ subfamily.

It participates in cofactor biosynthesis; adenosylcobalamin biosynthesis. Functionally, catalyzes amidations at positions B, D, E, and G on adenosylcobyrinic A,C-diamide. NH(2) groups are provided by glutamine, and one molecule of ATP is hydrogenolyzed for each amidation. In Mesorhizobium japonicum (strain LMG 29417 / CECT 9101 / MAFF 303099) (Mesorhizobium loti (strain MAFF 303099)), this protein is Cobyric acid synthase.